The primary structure comprises 451 residues: UDP-N-acetylmuramoylalanine--D-glutamate ligase (451 aa).

118–124 (GSNGKTT) is a binding site for ATP.

This sequence belongs to the MurCDEF family.

The protein resides in the cytoplasm. It carries out the reaction UDP-N-acetyl-alpha-D-muramoyl-L-alanine + D-glutamate + ATP = UDP-N-acetyl-alpha-D-muramoyl-L-alanyl-D-glutamate + ADP + phosphate + H(+). The protein operates within cell wall biogenesis; peptidoglycan biosynthesis. Functionally, cell wall formation. Catalyzes the addition of glutamate to the nucleotide precursor UDP-N-acetylmuramoyl-L-alanine (UMA). This chain is UDP-N-acetylmuramoylalanine--D-glutamate ligase, found in Shouchella clausii (strain KSM-K16) (Alkalihalobacillus clausii).